An 860-amino-acid chain; its full sequence is Transforming growth factor-beta receptor-associated protein 1 (860 aa).

The CNH domain maps to 24-297; that stretch reads HISIECVECC…HILQDFEGRV (274 aa). A CHCR repeat occupies 564-732; it reads RPLDEQQQTS…YLRAGPSAQD (169 aa).

This sequence belongs to the TRAP1 family. As to quaternary structure, interacts with TGFBR2 and ACVR2B; in the absence of ligand stimulation. Interacts with TGFBR1, ACVRL1, BMPR1A and ACVR1B; in the absence of ligand stimulation and to a less extent. Interacts with SMAD4; the interaction seems to be mutually exclusive with the interaction of SMAD4 and phosphorylated SMAD2. May interact with ALOX5. Interacts with RAB5C. Interacts with VPS8, VPS11 and VPS16. Component of the putative class C core vacuole/endosome tethering (CORVET) complex; the core of which composed of the class C Vps proteins VPS11, VPS16, VPS18 and VPS33A, is associated with VPS8 and TGFBRAP1.

The protein localises to the cytoplasm. The protein resides in the early endosome. In terms of biological role, plays a role in the TGF-beta/activin signaling pathway. It associates with inactive heteromeric TGF-beta and activin receptor complexes, mainly through the type II receptor, and is released upon activation of signaling. May recruit SMAD4 to the vicinity of the receptor complex and facilitate its interaction with receptor-regulated Smads, such as SMAD2. Plays a role in vesicle-mediated protein trafficking of the endocytic membrane transport pathway. Believed to act as a component of the putative CORVET endosomal tethering complexes which is proposed to be involved in the Rab5-to-Rab7 endosome conversion probably implicating MON1A/B, and via binding SNAREs and SNARE complexes to mediate tethering and docking events during SNARE-mediated membrane fusion. The CORVET complex is proposed to function as a Rab5 effector to mediate early endosome fusion probably in specific endosome subpopulations. Functions predominantly in APPL1-containing endosomes and in degradative but not recycling trafficking of endocytosed cargo. This is Transforming growth factor-beta receptor-associated protein 1 (Tgfbrap1) from Mus musculus (Mouse).